Here is a 93-residue protein sequence, read N- to C-terminus: YcgL domain-containing protein Ssed_2518 (93 aa).

Residues Met1–Lys85 form the YcgL domain.

The polypeptide is YcgL domain-containing protein Ssed_2518 (Shewanella sediminis (strain HAW-EB3)).